The sequence spans 95 residues: Large ribosomal subunit protein bL27 (95 aa).

A propeptide spanning residues 1-8 (MEMNLQFF) is cleaved from the precursor. The tract at residues 1–34 (MEMNLQFFSHHKGGGSTSNGRDSAGRRLGTKRAD) is disordered.

This sequence belongs to the bacterial ribosomal protein bL27 family. The N-terminus is cleaved by ribosomal processing cysteine protease Prp.

The protein is Large ribosomal subunit protein bL27 of Pediococcus pentosaceus (strain ATCC 25745 / CCUG 21536 / LMG 10740 / 183-1w).